Here is a 127-residue protein sequence, read N- to C-terminus: Protein ApaG (127 aa).

The ApaG domain maps to 3 to 127; it reads NERKYSIKVE…FILSVPRVLH (125 aa).

The chain is Protein ApaG from Nitrosomonas europaea (strain ATCC 19718 / CIP 103999 / KCTC 2705 / NBRC 14298).